The chain runs to 301 residues: Coiled-coil domain-containing protein 69-B (301 aa).

The tract at residues 1–43 (MGSKTSKMCCPQLRKKKRQKAHKEGPSSQELNDLNAKSQGPNE) is disordered. The N-myristoyl glycine moiety is linked to residue Gly-2. The span at 26–41 (PSSQELNDLNAKSQGP) shows a compositional bias: polar residues. Coiled coils occupy residues 42–167 (NELL…SILS) and 213–281 (KSTM…NLYR).

This sequence belongs to the CCDC69 family.

It localises to the cytoplasm. The protein localises to the cytoskeleton. The protein resides in the spindle. It is found in the midbody. Functionally, may act as a scaffold to regulate the recruitment and assembly of spindle midzone components. This chain is Coiled-coil domain-containing protein 69-B (ccdc69-b), found in Xenopus laevis (African clawed frog).